Reading from the N-terminus, the 414-residue chain is Tryptophan synthase beta chain (414 aa).

The interval 1-28 (MVSTISRQDQNNNDDLNQPSKEGRFGKY) is disordered. Residues 8 to 18 (QDQNNNDDLNQ) are compositionally biased toward low complexity. Lys-108 is subject to N6-(pyridoxal phosphate)lysine.

The protein belongs to the TrpB family. In terms of assembly, tetramer of two alpha and two beta chains. Pyridoxal 5'-phosphate serves as cofactor.

It carries out the reaction (1S,2R)-1-C-(indol-3-yl)glycerol 3-phosphate + L-serine = D-glyceraldehyde 3-phosphate + L-tryptophan + H2O. It participates in amino-acid biosynthesis; L-tryptophan biosynthesis; L-tryptophan from chorismate: step 5/5. Functionally, the beta subunit is responsible for the synthesis of L-tryptophan from indole and L-serine. This chain is Tryptophan synthase beta chain, found in Prochlorococcus marinus subsp. pastoris (strain CCMP1986 / NIES-2087 / MED4).